The sequence spans 433 residues: MLDIQLLRKDLDGVAKRLADRGYTLDVAAFSALEAERRAIQTRTEELQARRNSLSKQIGAMKGKGEDTSDVMAEVGGIGDEMKASEAKLGEIQTRLSDLMLGMPNIAHESVPVGKDEADNVEVRRWGTPREFDFAVKDHVDVGTPLGLDFETGAKLAGARFTMLRGSIARLHRALAQFMIDTHTLQHGYSETYTPYIVNPEILYGTGQLPKFADDMFRVEKGGGENTITQYLISTSEISLTNTVRDSIVEGSALPIKLTAHSPCFRSEAGSYGRDTRGMIRQHQFDKVEMVQVVAPDASYAALDEMVGHAEAILQKLGLPYRVITLCTGDMGFSAAKTFDLEVWLPAQNTYREISSCSNTEAFQARRMQARFRNAQGKPELVHTLNGSGLAVGRTLVAVLENYQNADGSVTVPEALRPYMGGMERIDAPAQVS.

Position 235-237 (235-237 (TSE)) interacts with L-serine. 266–268 (RSE) contacts ATP. Glu289 is a binding site for L-serine. Residue 353 to 356 (EISS) participates in ATP binding. Residue Ser388 participates in L-serine binding.

The protein belongs to the class-II aminoacyl-tRNA synthetase family. Type-1 seryl-tRNA synthetase subfamily. Homodimer. The tRNA molecule binds across the dimer.

It is found in the cytoplasm. It catalyses the reaction tRNA(Ser) + L-serine + ATP = L-seryl-tRNA(Ser) + AMP + diphosphate + H(+). The enzyme catalyses tRNA(Sec) + L-serine + ATP = L-seryl-tRNA(Sec) + AMP + diphosphate + H(+). It participates in aminoacyl-tRNA biosynthesis; selenocysteinyl-tRNA(Sec) biosynthesis; L-seryl-tRNA(Sec) from L-serine and tRNA(Sec): step 1/1. Functionally, catalyzes the attachment of serine to tRNA(Ser). Is also able to aminoacylate tRNA(Sec) with serine, to form the misacylated tRNA L-seryl-tRNA(Sec), which will be further converted into selenocysteinyl-tRNA(Sec). The protein is Serine--tRNA ligase of Burkholderia ambifaria (strain MC40-6).